The chain runs to 461 residues: Cysteine--tRNA ligase (461 aa).

Zn(2+) is bound at residue Cys30. Positions 32–42 match the 'HIGH' region motif; it reads VTVYDLCHIGH. Residues Cys211, His236, and Glu240 each coordinate Zn(2+). A 'KMSKS' region motif is present at residues 268 to 272; the sequence is KMSKS. Residue Lys271 coordinates ATP.

It belongs to the class-I aminoacyl-tRNA synthetase family. In terms of assembly, monomer. Zn(2+) serves as cofactor.

Its subcellular location is the cytoplasm. It catalyses the reaction tRNA(Cys) + L-cysteine + ATP = L-cysteinyl-tRNA(Cys) + AMP + diphosphate. This chain is Cysteine--tRNA ligase, found in Shewanella sp. (strain MR-4).